Consider the following 906-residue polypeptide: Ectonucleotide pyrophosphatase/phosphodiesterase family member 1 (906 aa).

The interval 1 to 22 (MERDGDQAGHGPRHGSAGNGRE) is disordered. Topologically, residues 1 to 58 (MERDGDQAGHGPRHGSAGNGRELESPAAASLLAPMDLGEEPLEKAERARPAKDPNTYK) are cytoplasmic. Ser25 carries the phosphoserine modification. Residues 27 to 34 (AAASLLAP) carry the Di-leucine motif motif. Residues 59-79 (VLSLVLSVCVLTTILGCIFGL) traverse the membrane as a helical; Signal-anchor for type II membrane protein segment. Topologically, residues 80–906 (KPSCAKEVKS…THLPIFSQED (827 aa)) are extracellular. SMB domains are found at residues 86 to 126 (EVKS…VEPT) and 127 to 171 (HIWT…DKKS). Disulfide bonds link Cys90/Cys104, Cys94/Cys122, Cys102/Cys115, Cys108/Cys114, Cys131/Cys148, Cys136/Cys166, Cys146/Cys159, Cys152/Cys158, Cys177/Cys223, and Cys185/Cys397. A glycan (N-linked (GlcNAc...) asparagine) is linked at Asn161. Residues 173–573 (VEETCESIDT…APNNGSHGSL (401 aa)) form a phosphodiesterase region. AMP contacts are provided by Asp200, Thr238, and Asn259. Zn(2+)-binding residues include Asp200 and Thr238. Thr238 (AMP-threonine intermediate) is an active-site residue. Residues Thr238 and Asn259 each contribute to the CMP site. Thr238 and Asn259 together coordinate dTMP. Residues Thr238 and Asn259 each coordinate GMP. Thr238 carries the post-translational modification Phosphothreonine. Asn267 is a glycosylation site (N-linked (GlcNAc...) asparagine). Residues Leu272, Lys277, and Tyr322 each contribute to the GMP site. AMP-binding residues include Lys277 and Tyr322. Lys277 and Tyr322 together coordinate CMP. Residue Tyr322 participates in dTMP binding. Asn323 is a glycosylation site (N-linked (GlcNAc...) asparagine). Asp358 lines the AMP pocket. Zn(2+) contacts are provided by Asp358, His362, Asp405, and His406. Asp358 provides a ligand contact to CMP. Asp358 is a dTMP binding site. A GMP-binding site is contributed by Asp358. A 2',3'-cGAMP-binding site is contributed by His362. His406 provides a ligand contact to AMP. Position 406 (His406) interacts with CMP. His406 serves as a coordination point for dTMP. Residue His406 participates in GMP binding. 6 disulfides stabilise this stretch: Cys413–Cys512, Cys462–Cys849, Cys596–Cys653, Cys607–Cys707, Cys609–Cys692, and Cys819–Cys829. N-linked (GlcNAc...) asparagine glycosylation is present at Asn459. Ser514 contributes to the 2',3'-cGAMP binding site. His517 is an AMP binding site. His517 provides a ligand contact to Zn(2+). His517 provides a ligand contact to CMP. Position 517 (His517) interacts with dTMP. Residue His517 coordinates GMP. Residues Asn567 and Asn624 are each glycosylated (N-linked (GlcNAc...) asparagine). The segment at 579-628 (KPIYNPSHPKEEGFLSQCPIKSTSNDLGCTCDPWIVPIKDFEKQLNLTTE) is linker. The segment at 635-906 (HMTVPYGRPR…THLPIFSQED (272 aa)) is nuclease-like domain. Asp781, Asp783, Asp785, Arg787, and Asp789 together coordinate Ca(2+).

It belongs to the nucleotide pyrophosphatase/phosphodiesterase family. Ectonucleotide pyrophosphatase/phosphodiesterase family member 1: Homodimer. Ectonucleotide pyrophosphatase/phosphodiesterase family member 1: Interacts with INSR; leading to inhibit INSR autophosphorylation and subsequent activation of INSR kinase activity. Ectonucleotide pyrophosphatase/phosphodiesterase family member 1, secreted form: Monomeric. Zn(2+) serves as cofactor. Post-translationally, N-glycosylated. In terms of processing, the secreted form is produced through cleavage at Lys-85 by intracellular processing. In terms of tissue distribution, selectively expressed on the surface of antibody-secreting cells. Expressed in osteocytes and osteoclasts.

The protein localises to the cell membrane. It is found in the basolateral cell membrane. Its subcellular location is the secreted. It carries out the reaction Hydrolytically removes 5'-nucleotides successively from the 3'-hydroxy termini of 3'-hydroxy-terminated oligonucleotides.. The catalysed reaction is a ribonucleoside 5'-triphosphate + H2O = a ribonucleoside 5'-phosphate + diphosphate + H(+). The enzyme catalyses ATP + H2O = AMP + diphosphate + H(+). It catalyses the reaction UTP + H2O = UMP + diphosphate + H(+). It carries out the reaction GTP + H2O = GMP + diphosphate + H(+). The catalysed reaction is CTP + H2O = CMP + diphosphate + H(+). The enzyme catalyses 2',3'-cGAMP + 2 H2O = GMP + AMP + 2 H(+). It catalyses the reaction P(1),P(4)-bis(5'-adenosyl) tetraphosphate + H2O = AMP + ATP + 2 H(+). It carries out the reaction 3',5'-cyclic AMP + H2O = AMP + H(+). At low concentrations of ATP, a phosphorylated intermediate is formed which inhibits further hydrolysis. Nucleotide pyrophosphatase that generates diphosphate (PPi) and functions in bone mineralization and soft tissue calcification by regulating pyrophosphate levels. PPi inhibits bone mineralization and soft tissue calcification by binding to nascent hydroxyapatite crystals, thereby preventing further growth of these crystals. Preferentially hydrolyzes ATP, but can also hydrolyze other nucleoside 5' triphosphates such as GTP, CTP and UTP to their corresponding monophosphates with release of pyrophosphate, as well as diadenosine polyphosphates, and also 3',5'-cAMP to AMP. May also be involved in the regulation of the availability of nucleotide sugars in the endoplasmic reticulum and Golgi, and the regulation of purinergic signaling. Inhibits ectopic joint calcification and maintains articular chondrocytes by repressing hedgehog signaling; it is however unclear whether hedgehog inhibition is direct or indirect. Appears to modulate insulin sensitivity. Also involved in melanogenesis. Also able to hydrolyze 2',3'-cGAMP (cyclic GMP-AMP), a second messenger that activates TMEM173/STING and triggers type-I interferon production. 2',3'-cGAMP degradation takes place in the lumen or extracellular space, and not in the cytosol where it is produced; the role of 2',3'-cGAMP hydrolysis is therefore unclear. Not able to hydrolyze the 2',3'-cGAMP linkage isomer 3',3'-cGAMP. The polypeptide is Ectonucleotide pyrophosphatase/phosphodiesterase family member 1 (Mus musculus (Mouse)).